A 119-amino-acid chain; its full sequence is VIGGDECNINEHPFLVALYYSTFFCGMTLINQEWVLTAAHESEKFPKEKYFIFCPNNKDIMLIRLDKPVSNSEHIAPLSLPSSPPSVGSVCRKPALYTKVFDYLLWIQSIIAGNTATCP.

The Peptidase S1 domain occupies 1 to 112 (VIGGDECNIN…YLLWIQSIIA (112 aa)). Residues His-40 and Asp-59 each act as charge relay system in the active site. A disulfide bridge connects residues Cys-54 and Cys-118.

As to quaternary structure, monomer. Contains both N-linked carbohydrates and sialic acid. Expressed by the venom gland.

The protein localises to the secreted. Strongly inhibited by PMSF and slightly inhibited by EDTA and soybean trypsin inhibitor. Thrombin-like snake venom serine protease, with high clotting activity in vitro. Also has fibrinogenolytic ability, showing a fast degradation of fibrinogen Aalpha chain (FGA), a slow degradation of Bbeta chain (FGB) and no degradation of gamma chain. Also causes platelet aggregation in platelet rich plasma (PRP) and washed platelet suspension. This chain is Thrombin-like enzyme TLBan, found in Bothrocophias andianus (Andean lancehead).